The following is a 327-amino-acid chain: Movement protein (327 aa).

Positions 297-327 (SASSSNTENELARVSQNIDLLKNKLKEICGE) form a coiled coil.

Belongs to the caulimoviridae movement protein family. Homotrimer, through the coiled-coil domain. Interacts with VAP. May interact (via N-terminus) with host prenylated Rab acceptor protein 1D (PRA1D).

It is found in the host cell junction. It localises to the host plasmodesma. Transports viral genome to neighboring plant cells directly through plasmosdesmata, without any budding. The movement protein allows efficient cell to cell propagation, by bypassing the host cell wall barrier. Acts by forming tubules structures that increase the size exclusion limit (SEL) of plasmodesmata, thereby allowing viral ribonucleocapsids to spread directly to neighboring cells. The protein is Movement protein of Cauliflower mosaic virus (strain CM-1841) (CaMV).